We begin with the raw amino-acid sequence, 240 residues long: Methylthioribulose-1-phosphate dehydratase (240 aa).

Cys99 lines the substrate pocket. Zn(2+) is bound by residues His116 and His118. Residue Glu145 is the Proton donor/acceptor of the active site. His201 serves as a coordination point for Zn(2+).

This sequence belongs to the aldolase class II family. MtnB subfamily. Zn(2+) is required as a cofactor.

The protein localises to the cytoplasm. The enzyme catalyses 5-(methylsulfanyl)-D-ribulose 1-phosphate = 5-methylsulfanyl-2,3-dioxopentyl phosphate + H2O. The protein operates within amino-acid biosynthesis; L-methionine biosynthesis via salvage pathway; L-methionine from S-methyl-5-thio-alpha-D-ribose 1-phosphate: step 2/6. In terms of biological role, catalyzes the dehydration of methylthioribulose-1-phosphate (MTRu-1-P) into 2,3-diketo-5-methylthiopentyl-1-phosphate (DK-MTP-1-P). The chain is Methylthioribulose-1-phosphate dehydratase from Paracoccidioides brasiliensis (strain Pb18).